Here is a 295-residue protein sequence, read N- to C-terminus: Protoheme IX farnesyltransferase 2 (295 aa).

The next 9 membrane-spanning stretches (helical) occupy residues 9–29 (ITKPGIIFGNVLSVAGGFFLA), 36–56 (FALFLAVVIGTSLVVASGCVF), 83–103 (LTLALVYATLLGVAGFSLLYV), 108–128 (LSAFCALIGFIVYVGFYSLWL), 135–155 (GTLVGSLSGAMPPVIGYCAVS), 163–183 (VTLLVMFSLWQMPHSFAIAIF), 209–229 (IVLYVLAFVLATLMLTLGGYA), 230–250 (GLGYLAVAAAMGLYWLYMAWG), and 264–284 (VFGFSILTVTALSVMMGVDSQ).

The protein belongs to the UbiA prenyltransferase family. Protoheme IX farnesyltransferase subfamily.

It localises to the cell inner membrane. It catalyses the reaction heme b + (2E,6E)-farnesyl diphosphate + H2O = Fe(II)-heme o + diphosphate. Its pathway is porphyrin-containing compound metabolism; heme O biosynthesis; heme O from protoheme: step 1/1. Converts heme B (protoheme IX) to heme O by substitution of the vinyl group on carbon 2 of heme B porphyrin ring with a hydroxyethyl farnesyl side group. This chain is Protoheme IX farnesyltransferase 2, found in Pseudomonas putida (strain W619).